Reading from the N-terminus, the 133-residue chain is FK506-binding protein 2 (133 aa).

Residues 1–20 (MKLLYCLLLVILALVGLSSG) form the signal peptide. Residues 45–133 (GDKLKIHYTG…IFDVELIGIN (89 aa)) enclose the PPIase FKBP-type domain.

Belongs to the FKBP-type PPIase family.

The enzyme catalyses [protein]-peptidylproline (omega=180) = [protein]-peptidylproline (omega=0). Its activity is regulated as follows. Inhibited by both FK506 and rapamycin. PPIases accelerate the folding of proteins by catalyzing the cis-trans isomerization of proline imidic peptide bonds in oligopeptides. This Dictyostelium discoideum (Social amoeba) protein is FK506-binding protein 2 (fkbp2).